The sequence spans 82 residues: Small ribosomal subunit protein bS18 (82 aa).

A disordered region spans residues Met-1 to Cys-20.

This sequence belongs to the bacterial ribosomal protein bS18 family. As to quaternary structure, part of the 30S ribosomal subunit. Forms a tight heterodimer with protein bS6.

Binds as a heterodimer with protein bS6 to the central domain of the 16S rRNA, where it helps stabilize the platform of the 30S subunit. The chain is Small ribosomal subunit protein bS18 from Brucella abortus (strain 2308).